The chain runs to 126 residues: Protein ApaG (126 aa).

The region spanning 2–126 (SDPRYQIDVS…FRLAVPGALH (125 aa)) is the ApaG domain.

In Pseudomonas putida (strain W619), this protein is Protein ApaG.